A 695-amino-acid chain; its full sequence is Eukaryotic translation initiation factor 3 subunit B (695 aa).

Basic and acidic residues predominate over residues 1–10; the sequence is MAKKKGDEKA. The disordered stretch occupies residues 1–43; sequence MAKKKGDEKANPAPQSDNEEQNFEEEPDFDDPEDFVEIPEEEL. Residues 17–43 show a composition bias toward acidic residues; that stretch reads DNEEQNFEEEPDFDDPEDFVEIPEEEL. The 85-residue stretch at 60 to 144 folds into the RRM domain; sequence NVVVVDGCPQ…HTFLVNLFTD (85 aa). 4 WD repeats span residues 164 to 205, 295 to 335, 338 to 373, and 444 to 486; these read KVQS…PLLL, PPDE…LLDK, IKIP…TLLE, and EIKE…APTL.

This sequence belongs to the eIF-3 subunit B family. Component of the eukaryotic translation initiation factor 3 (eIF-3) complex.

It is found in the cytoplasm. In terms of biological role, RNA-binding component of the eukaryotic translation initiation factor 3 (eIF-3) complex, which is involved in protein synthesis of a specialized repertoire of mRNAs and, together with other initiation factors, stimulates binding of mRNA and methionyl-tRNAi to the 40S ribosome. The eIF-3 complex specifically targets and initiates translation of a subset of mRNAs involved in cell proliferation. This chain is Eukaryotic translation initiation factor 3 subunit B, found in Bombyx mori (Silk moth).